The chain runs to 333 residues: Holliday junction branch migration complex subunit RuvB (333 aa).

Residues 1-182 (MDERLLSQSH…FGVTLKLEYY (182 aa)) are large ATPase domain (RuvB-L). ATP is bound by residues Leu21, Arg22, Gly63, Lys66, Thr67, Thr68, 129–131 (EDY), Arg172, Tyr182, and Arg219. A Mg(2+)-binding site is contributed by Thr67. The small ATPAse domain (RuvB-S) stretch occupies residues 183–253 (ETHELAAIVS…LASDALDRLH (71 aa)). Positions 256–333 (ALGLDEVDHR…SHFGYEEEEE (78 aa)) are head domain (RuvB-H). Positions 311 and 316 each coordinate DNA.

It belongs to the RuvB family. As to quaternary structure, homohexamer. Forms an RuvA(8)-RuvB(12)-Holliday junction (HJ) complex. HJ DNA is sandwiched between 2 RuvA tetramers; dsDNA enters through RuvA and exits via RuvB. An RuvB hexamer assembles on each DNA strand where it exits the tetramer. Each RuvB hexamer is contacted by two RuvA subunits (via domain III) on 2 adjacent RuvB subunits; this complex drives branch migration. In the full resolvosome a probable DNA-RuvA(4)-RuvB(12)-RuvC(2) complex forms which resolves the HJ.

It is found in the cytoplasm. The catalysed reaction is ATP + H2O = ADP + phosphate + H(+). Functionally, the RuvA-RuvB-RuvC complex processes Holliday junction (HJ) DNA during genetic recombination and DNA repair, while the RuvA-RuvB complex plays an important role in the rescue of blocked DNA replication forks via replication fork reversal (RFR). RuvA specifically binds to HJ cruciform DNA, conferring on it an open structure. The RuvB hexamer acts as an ATP-dependent pump, pulling dsDNA into and through the RuvAB complex. RuvB forms 2 homohexamers on either side of HJ DNA bound by 1 or 2 RuvA tetramers; 4 subunits per hexamer contact DNA at a time. Coordinated motions by a converter formed by DNA-disengaged RuvB subunits stimulates ATP hydrolysis and nucleotide exchange. Immobilization of the converter enables RuvB to convert the ATP-contained energy into a lever motion, pulling 2 nucleotides of DNA out of the RuvA tetramer per ATP hydrolyzed, thus driving DNA branch migration. The RuvB motors rotate together with the DNA substrate, which together with the progressing nucleotide cycle form the mechanistic basis for DNA recombination by continuous HJ branch migration. Branch migration allows RuvC to scan DNA until it finds its consensus sequence, where it cleaves and resolves cruciform DNA. In Exiguobacterium sp. (strain ATCC BAA-1283 / AT1b), this protein is Holliday junction branch migration complex subunit RuvB.